We begin with the raw amino-acid sequence, 40 residues long: Photosystem II reaction center protein J (40 aa).

The helical transmembrane segment at 8–28 (IPLWIIGTVTGILVIGLVGIF) threads the bilayer.

Belongs to the PsbJ family. PSII is composed of 1 copy each of membrane proteins PsbA, PsbB, PsbC, PsbD, PsbE, PsbF, PsbH, PsbI, PsbJ, PsbK, PsbL, PsbM, PsbT, PsbX, PsbY, PsbZ, Psb30/Ycf12, at least 3 peripheral proteins of the oxygen-evolving complex and a large number of cofactors. It forms dimeric complexes.

The protein localises to the plastid. The protein resides in the chloroplast thylakoid membrane. One of the components of the core complex of photosystem II (PSII). PSII is a light-driven water:plastoquinone oxidoreductase that uses light energy to abstract electrons from H(2)O, generating O(2) and a proton gradient subsequently used for ATP formation. It consists of a core antenna complex that captures photons, and an electron transfer chain that converts photonic excitation into a charge separation. The polypeptide is Photosystem II reaction center protein J (Jasminum nudiflorum (Winter jasmine)).